The primary structure comprises 40 residues: Photosystem I reaction center subunit IX (40 aa).

Residues 4–24 traverse the membrane as a helical segment; it reads FFESWPMAAVLWVWLTAGIIV.

This sequence belongs to the PsaJ family.

It is found in the cellular thylakoid membrane. May help in the organization of the PsaE and PsaF subunits. This is Photosystem I reaction center subunit IX from Prochlorococcus marinus (strain MIT 9313).